The primary structure comprises 212 residues: Large ribosomal subunit protein bL25 (212 aa).

Positions 1–25 are disordered; the sequence is MSQSTIHKIAVKKRTETGKNENNRL. Positions 13 to 24 are enriched in basic and acidic residues; it reads KRTETGKNENNR.

It belongs to the bacterial ribosomal protein bL25 family. CTC subfamily. As to quaternary structure, part of the 50S ribosomal subunit; part of the 5S rRNA/L5/L18/L25 subcomplex. Contacts the 5S rRNA. Binds to the 5S rRNA independently of L5 and L18.

Functionally, this is one of the proteins that binds to the 5S RNA in the ribosome where it forms part of the central protuberance. This chain is Large ribosomal subunit protein bL25, found in Leptospira borgpetersenii serovar Hardjo-bovis (strain L550).